Here is a 69-residue protein sequence, read N- to C-terminus: DNA-directed RNA polymerase subunit omega (69 aa).

It belongs to the RNA polymerase subunit omega family. In terms of assembly, the RNAP catalytic core consists of 2 alpha, 1 beta, 1 beta' and 1 omega subunit. When a sigma factor is associated with the core the holoenzyme is formed, which can initiate transcription.

It catalyses the reaction RNA(n) + a ribonucleoside 5'-triphosphate = RNA(n+1) + diphosphate. Functionally, promotes RNA polymerase assembly. Latches the N- and C-terminal regions of the beta' subunit thereby facilitating its interaction with the beta and alpha subunits. This Hahella chejuensis (strain KCTC 2396) protein is DNA-directed RNA polymerase subunit omega.